Reading from the N-terminus, the 199-residue chain is Peroxynitrite isomerase (199 aa).

The GXWXGXG signature appears at 20–26 (GVWEGTG). Position 190 (His-190) interacts with heme b.

This sequence belongs to the nitrobindin family. Homodimer. Heme b is required as a cofactor.

The catalysed reaction is peroxynitrite = nitrate. The protein operates within nitrogen metabolism. Its function is as follows. Heme-binding protein able to scavenge peroxynitrite and to protect free L-tyrosine against peroxynitrite-mediated nitration, by acting as a peroxynitrite isomerase that converts peroxynitrite to nitrate. Therefore, this protein likely plays a role in peroxynitrite sensing and in the detoxification of reactive nitrogen and oxygen species (RNS and ROS, respectively). Is able to bind nitric oxide (NO) in vitro, but may act as a sensor of peroxynitrite levels in vivo. The polypeptide is Peroxynitrite isomerase (Clavibacter michiganensis subsp. michiganensis (strain NCPPB 382)).